We begin with the raw amino-acid sequence, 342 residues long: S-adenosylmethionine:tRNA ribosyltransferase-isomerase (342 aa).

This sequence belongs to the QueA family. As to quaternary structure, monomer.

It is found in the cytoplasm. It carries out the reaction 7-aminomethyl-7-carbaguanosine(34) in tRNA + S-adenosyl-L-methionine = epoxyqueuosine(34) in tRNA + adenine + L-methionine + 2 H(+). It participates in tRNA modification; tRNA-queuosine biosynthesis. Its function is as follows. Transfers and isomerizes the ribose moiety from AdoMet to the 7-aminomethyl group of 7-deazaguanine (preQ1-tRNA) to give epoxyqueuosine (oQ-tRNA). This Campylobacter jejuni subsp. jejuni serotype O:6 (strain 81116 / NCTC 11828) protein is S-adenosylmethionine:tRNA ribosyltransferase-isomerase.